Here is a 906-residue protein sequence, read N- to C-terminus: Envelope glycoprotein B (906 aa).

The signal sequence occupies residues 1–31 (MESRIWCLVVCVNLCIVCLGAAVSSSSTSHA). A compositionally biased stretch (low complexity) spans 29–46 (SHATSSTHNGSHTSRTTS). Positions 29 to 51 (SHATSSTHNGSHTSRTTSAQTRS) are disordered. The Virion surface portion of the chain corresponds to 32-750 (TSSTHNGSHT…EGVATFLKNP (719 aa)). N-linked (GlcNAc...) asparagine; by host glycosylation is found at Asn37, Asn68, Asn73, and Asn85. Intrachain disulfides connect Cys94-Cys550, Cys111-Cys506, Cys185-Cys250, Cys246-Cys250, and Cys344-Cys391. The segment at 152–158 (SYAYIYT) is involved in fusion and/or binding to host membrane. An N-linked (GlcNAc...) asparagine; by host glycan is attached at Asn208. An involved in fusion and/or binding to host membrane region spans residues 237-244 (GSTWLYRE). 14 N-linked (GlcNAc...) asparagine; by host glycosylation sites follow: Asn281, Asn286, Asn302, Asn341, Asn383, Asn405, Asn409, Asn417, Asn447, Asn452, Asn464, Asn465, Asn554, and Asn585. Cys573 and Cys610 form a disulfide bridge. 2 hydrophobic membrane proximal region regions span residues 696–748 (VEDK…TFLK) and 727–747 (VAIG…ATFL). A helical membrane pass occupies residues 751-771 (FGAFTIILVAIAVVIITYLIY). Topologically, residues 772 to 906 (TRQRRLCTQP…LKDSDEEENV (135 aa)) are intravirion. Polar residues-rich tracts occupy residues 797–809 (VTSG…SLQA) and 859–876 (RAQQ…GTQD). Disordered stretches follow at residues 797-837 (VTSG…TAAP) and 856-906 (AEQR…EENV). Residues 877–886 (KGQKPNLLDR) are compositionally biased toward basic and acidic residues. Residues 894 to 897 (YRHL) carry the Internalization motif motif.

The protein belongs to the herpesviridae glycoprotein B family. In terms of assembly, homotrimer; disulfide-linked. Binds to heparan sulfate proteoglycans. Interacts with gH/gL heterodimer. Interacts with host TLR1 and TLR2. Interacts with host C-type lectin CD209/DC-SIGN. Interacts with host ITGB1, EGFR, and PDGFRA. Post-translationally, a proteolytic cleavage by host furin generates two subunits that remain linked by disulfide bonds.

The protein localises to the virion membrane. The protein resides in the host cell membrane. It localises to the host endosome membrane. Its subcellular location is the host Golgi apparatus membrane. Envelope glycoprotein that plays a role in host cell entry, cell to-cell virus transmission, and fusion of infected cells. May be involved in the initial attachment via binding to heparan sulfate together with the gM/gN complex that binds heparin with higher affinity. Interacts with host integrin ITGB1, PDGFRA and EGFR that likely serve as postattachment entry receptors. Also participates in the fusion of viral and cellular membranes leading to virus entry into the host cell. Membrane fusion is mediated by the fusion machinery composed at least of gB and the heterodimer gH/gL. The sequence is that of Envelope glycoprotein B from Human cytomegalovirus (strain AD169) (HHV-5).